Consider the following 837-residue polypeptide: Histone acetyltransferase KAT2A (837 aa).

The interval 1–99 is disordered; it reads MAEPSQAPTP…RKAQVRGLPR (99 aa). Alanine 2 carries the post-translational modification N-acetylalanine. Residues 7-51 are compositionally biased toward pro residues; the sequence is APTPAPAAQPRPLQSPAPAPTPTPAPSPASAPIPTPTPAPAPAPA. Over residues 58 to 74 the composition is skewed to gly residues; sequence TGTGGPGVGSGGAGSGG. The segment covering 75–87 has biased composition (low complexity); it reads DPARPGLSQQQRA. Residues 88–99 are compositionally biased toward basic residues; the sequence is SQRKAQVRGLPR. A Phosphoserine modification is found at serine 307. Positions 407 to 434 are disordered; the sequence is FSPSMGGGSNSSLSLDSAGAEPMPGEKR. Residues 416–425 are compositionally biased toward low complexity; it reads NSSLSLDSAG. One can recognise an N-acetyltransferase domain in the interval 503–656; the sequence is VIGNSLTPKA…GATLMECELN (154 aa). The residue at position 549 (lysine 549) is an N6-acetyllysine. Glutamate 575 (proton donor/acceptor) is an active-site residue. Acetyl-CoA contacts are provided by residues 579-581, 586-592, and tyrosine 617; these read CAV and QVKGYGT. Succinyl-CoA contacts are provided by residues 579–581, 586–592, and tyrosine 617; these read CAV and QVKGYGT. The segment at 639-648 is loop 3; the sequence is LGYIKDYEGA. Lysine 728 participates in a covalent cross-link: Glycyl lysine isopeptide (Lys-Gly) (interchain with G-Cter in SUMO2). A Bromo domain is found at 728–832; the sequence is KDPDQLYTTL…KFFYFKLKEG (105 aa). Threonine 735 carries the phosphothreonine modification. Glycyl lysine isopeptide (Lys-Gly) (interchain with G-Cter in SUMO2) cross-links involve residues lysine 759 and lysine 791.

Belongs to the acetyltransferase family. GCN5 subfamily. Homooligomer; may form a tetramer of homodimers. Interacts with EP300, CREBBP and ADA2. Component of the TFTC-HAT complex, at least composed of TAF5L, TAF6L, TAF3, TADA3L, SUPT3H/SPT3, TAF2/TAFII150, TAF4/TAFII135, TAF5/TAFII100, KAT2A/GCN5L2, TAF10 and TRRAP. Component of the STAGA transcription coactivator-HAT complex, at least composed of SUPT3H, KAT2A, SUPT7L, TAF5L, TAF6L, TADA3L, TAD1L, TAF10, TAF12, TRRAP and TAF9. The STAGA core complex is associated with a subcomplex required for histone deubiquitination composed of ATXN7L3, ENY2 and USP22. Component of the ADA2A-containing complex (ATAC), composed of KAT14, KAT2A, TADA2L, TADA3L, ZZ3, MBIP, WDR5, YEATS2, CCDC101 and DR1. In the complex, it probably interacts directly with KAT14, MBIP and WDR5. Interacts with PML. Interacts with CEBPB. Interacts with TACC1, TACC2 and TACC3. Interacts with RELA. Interacts with NFATC2. Interacts with TBX5. Interacts with PLK4. Associates with the 2-oxoglutarate dehydrogenase complex. Interacts with XPC; leading to KAT2A recruitment to promoters and subsequent acetylation of histones. Interacts with ERCC3/XPB; leading to KAT2A recruitment to promoters and subsequent acetylation of histones. Interacts with ISL1. Interactions of ISL1 with MLIP1 or KAT2A may be mutually exclusive. In terms of assembly, (Microbial infection) Interacts with and acetylates HIV-1 Tat. In terms of processing, acetylated at Lys-549, inhibiting the protein acetyltransferase activity. Deacetylation at Lys-549 by SIRT6 promotes phosphorylation at Ser-307 and Thr-735 and subsequent activation of the protein acetyltransferase activity, leading to acetylation and inactivation of PPARGC1A. As to expression, expressed in all tissues tested.

It localises to the nucleus. Its subcellular location is the chromosome. It is found in the cytoplasm. The protein resides in the cytoskeleton. The protein localises to the microtubule organizing center. It localises to the centrosome. The enzyme catalyses L-lysyl-[histone] + acetyl-CoA = N(6)-acetyl-L-lysyl-[histone] + CoA + H(+). It catalyses the reaction L-lysyl-[protein] + acetyl-CoA = N(6)-acetyl-L-lysyl-[protein] + CoA + H(+). The catalysed reaction is succinyl-CoA + L-lysyl-[protein] = N(6)-succinyl-L-lysyl-[protein] + CoA + H(+). It carries out the reaction glutaryl-CoA + L-lysyl-[protein] = N(6)-glutaryl-L-lysyl-[protein] + CoA + H(+). In terms of biological role, protein lysine acyltransferase that can act as a acetyltransferase, glutaryltransferase, succinyltransferase or malonyltransferase, depending on the context. Acts as a histone lysine succinyltransferase: catalyzes succinylation of histone H3 on 'Lys-79' (H3K79succ), with a maximum frequency around the transcription start sites of genes. Succinylation of histones gives a specific tag for epigenetic transcription activation. Association with the 2-oxoglutarate dehydrogenase complex, which provides succinyl-CoA, is required for histone succinylation. In different complexes, functions either as an acetyltransferase (HAT) or as a succinyltransferase: in the SAGA and ATAC complexes, acts as a histone acetyltransferase. Has significant histone acetyltransferase activity with core histones, but not with nucleosome core particles. Has a a strong preference for acetylation of H3 at 'Lys-9' (H3K9ac). Acetylation of histones gives a specific tag for epigenetic transcription activation. Recruited by the XPC complex at promoters, where it specifically mediates acetylation of histone variant H2A.Z.1/H2A.Z, thereby promoting expression of target genes. Involved in long-term memory consolidation and synaptic plasticity: acts by promoting expression of a hippocampal gene expression network linked to neuroactive receptor signaling. Acts as a positive regulator of T-cell activation: upon TCR stimulation, recruited to the IL2 promoter following interaction with NFATC2 and catalyzes acetylation of histone H3 at 'Lys-9' (H3K9ac), leading to promote IL2 expression. Required for growth and differentiation of craniofacial cartilage and bone by regulating acetylation of histone H3 at 'Lys-9' (H3K9ac). Regulates embryonic stem cell (ESC) pluripotency and differentiation. Also acetylates non-histone proteins, such as CEBPB, MRE11, PPARGC1A, PLK4 and TBX5. Involved in heart and limb development by mediating acetylation of TBX5, acetylation regulating nucleocytoplasmic shuttling of TBX5. Acts as a negative regulator of centrosome amplification by mediating acetylation of PLK4. Acts as a negative regulator of gluconeogenesis by mediating acetylation and subsequent inactivation of PPARGC1A. Also acts as a histone glutaryltransferase: catalyzes glutarylation of histone H4 on 'Lys-91' (H4K91glu), a mark that destabilizes nucleosomes by promoting dissociation of the H2A-H2B dimers from nucleosomes. Functionally, (Microbial infection) In case of HIV-1 infection, it is recruited by the viral protein Tat. Regulates Tat's transactivating activity and may help inducing chromatin remodeling of proviral genes. The polypeptide is Histone acetyltransferase KAT2A (Homo sapiens (Human)).